We begin with the raw amino-acid sequence, 504 residues long: Anaerobic nitric oxide reductase transcription regulator NorR (504 aa).

Aspartate 57 carries the 4-aspartylphosphate modification. Residues 187–416 (MIGLSPGMTQ…LEHAIHRAVV (230 aa)) enclose the Sigma-54 factor interaction domain. ATP is bound by residues 215–222 (GETGTGKE) and 278–287 (ADNGTLFLDE). A DNA-binding region (H-T-H motif) is located at residues 479–498 (WAACARMLETDVANLHRLAK).

It functions in the pathway nitrogen metabolism; nitric oxide reduction. In terms of biological role, required for the expression of anaerobic nitric oxide (NO) reductase, acts as a transcriptional activator for at least the norVW operon. Activation also requires sigma-54. This chain is Anaerobic nitric oxide reductase transcription regulator NorR, found in Escherichia coli O139:H28 (strain E24377A / ETEC).